Reading from the N-terminus, the 696-residue chain is Junctophilin-2 (696 aa).

The Cytoplasmic segment spans residues 1 to 674 (MSGGRFDFDD…EVEVEEVPNT (674 aa)). 6 MORN repeats span residues 14–36 (YCGG…KGQG), 38–59 (YSGS…SGNT), 60–79 (FEGY…TKGR), 82–104 (YKGE…NSGA), 106–128 (YEGT…DGGT), and 129–151 (YQGQ…PYGM). Residues S162 and S165 each carry the phosphoserine modification. Disordered regions lie at residues 164–192 (SSLR…SPPV) and 246–273 (LSSG…AAPF). 2 MORN repeats span residues 285–307 (YMGE…SGLR) and 308–330 (YEGE…DGHR). Residues 345-359 (KRRVLPLKSSKVRQK) carry the Bipartite nuclear localization signal motif. Positions 439–664 (NSESLLEPPE…RKEVAQAKEA (226 aa)) are disordered. Residues S440, S442, and S462 each carry the phosphoserine modification. Basic and acidic residues predominate over residues 457–471 (ERPRESPQLHERETP). T470 carries the post-translational modification Phosphothreonine. Pro residues predominate over residues 474-487 (EGGPPSPAGTPPQP). Phosphoserine is present on S479. At T483 the chain carries Phosphothreonine. The Nuclear localization signal motif lies at 488–492 (KRPRP). 2 positions are modified to phosphoserine: S527 and S533. A compositionally biased stretch (acidic residues) spans 573–585 (PLEDEQEPEPEPE). Phosphoserine occurs at positions 593, 597, and 613. Residues 631–644 (AEPKAKARKTEARG) show a composition bias toward basic and acidic residues. A helical; Anchor for type IV membrane protein transmembrane segment spans residues 675 to 695 (VLICMVILLNIGLAILFVHLL).

The protein belongs to the junctophilin family. Interacts with TRPC3. Interacts with BAG5 and HSPA8; the interaction with HSPA8 is increased in the presence of BAG5. In terms of assembly, interacts with MEF2C. Proteolytically cleaved by calpain in response to cardiac stress. The major cleavage site takes place at the C-terminus and leads to the release of the Junctophilin-2 N-terminal fragment chain (JP2NT). In terms of processing, phosphorylation on Ser-165, probably by PKC, affects RYR1-mediated calcium ion release, interaction with TRPC3, and skeletal muscle myotubule development. As to expression, abundantly expressed in skeletal muscle and heart. Weak expression in stomach and lung.

The protein resides in the cell membrane. Its subcellular location is the sarcoplasmic reticulum membrane. It is found in the endoplasmic reticulum membrane. It localises to the nucleus. Membrane-binding protein that provides a structural bridge between the plasma membrane and the sarcoplasmic reticulum and is required for normal excitation-contraction coupling in cardiomyocytes. Provides a structural foundation for functional cross-talk between the cell surface and intracellular Ca(2+) release channels by maintaining the 12-15 nm gap between the sarcolemma and the sarcoplasmic reticulum membranes in the cardiac dyads. Necessary for proper intracellular Ca(2+) signaling in cardiac myocytes via its involvement in ryanodine receptor-mediated calcium ion release. Contributes to the construction of skeletal muscle triad junctions. In terms of biological role, transcription repressor required to safeguard against the deleterious effects of cardiac stress. Generated following cleavage of the Junctophilin-2 chain by calpain in response to cardiac stress in cardiomyocytes. Following cleavage and release from the membrane, translocates to the nucleus, binds DNA and represses expression of genes implicated in cell growth and differentiation, hypertrophy, inflammation and fibrosis. Modifies the transcription profile and thereby attenuates pathological remodeling in response to cardiac stress. Probably acts by competing with MEF2 transcription factors and TATA-binding proteins. This Mus musculus (Mouse) protein is Junctophilin-2.